A 454-amino-acid chain; its full sequence is NADP-specific glutamate dehydrogenase (454 aa).

Ser-2 carries the post-translational modification N-acetylserine. Residue Lys-114 is part of the active site.

The protein belongs to the Glu/Leu/Phe/Val dehydrogenases family. Homohexamer.

The catalysed reaction is L-glutamate + NADP(+) + H2O = 2-oxoglutarate + NH4(+) + NADPH + H(+). The chain is NADP-specific glutamate dehydrogenase (GDH) from Neurospora sitophila (Chrysonilia sitophila).